A 472-amino-acid chain; its full sequence is Nuclear hormone receptor family member nhr-2 (472 aa).

4 stretches are compositionally biased toward polar residues: residues 57–83, 90–112, 138–147, and 159–171; these read TATN…LSQI, NDTI…HNQP, LSSTQSSPDN, and VRRN…SAST. 2 disordered regions span residues 57 to 112 and 138 to 184; these read TATN…HNQP and LSST…RTNT. A DNA-binding region (nuclear receptor) is located at residues 215–297; sequence KDRCMVCGDN…VGMNRDNVRV (83 aa). 2 consecutive NR C4-type zinc fingers follow at residues 218–238 and 267–285; these read CMVC…CEGC and CAAN…FAKC.

The protein belongs to the nuclear hormone receptor family.

Its subcellular location is the nucleus. In terms of biological role, orphan nuclear receptor. This is Nuclear hormone receptor family member nhr-2 (nhr-2) from Caenorhabditis elegans.